The primary structure comprises 628 residues: Very-long-chain aldehyde decarbonylase GL1-2 (628 aa).

5 helical membrane-spanning segments follow: residues 37–57, 131–151, 191–211, 299–319, and 331–351; these read GAAP…ARGL, GWAI…YWAH, VVIG…VGLV, DFVF…PFVL, and FVLL…WCCS. Residues 137–277 form the Fatty acid hydroxylase domain; that stretch reads LLHVLVAEPL…MPIFDLLGGT (141 aa).

Belongs to the sterol desaturase family. As to quaternary structure, homodimer. Expressed in germinating seeds, radicals and leaves.

Its subcellular location is the endoplasmic reticulum membrane. It catalyses the reaction a long-chain fatty aldehyde + 2 NADPH + O2 + H(+) = a long-chain alkane + formate + 2 NADP(+) + H2O. Its function is as follows. Aldehyde decarbonylase involved in the conversion of aldehydes to alkanes. Core component of a very-long-chain alkane synthesis complex. Required for the formation of wax layers conferring cuticular permeability and drought tolerance. The protein is Very-long-chain aldehyde decarbonylase GL1-2 of Oryza sativa subsp. japonica (Rice).